Reading from the N-terminus, the 247-residue chain is Uridylate kinase (247 aa).

An ATP-binding site is contributed by 18 to 21 (KLSG). A UMP-binding site is contributed by Gly60. Residues Gly61 and Arg65 each coordinate ATP. Residues Asp80 and 141–148 (TGNPFFTT) each bind UMP. ATP is bound by residues Thr168, Tyr174, and Asp177.

It belongs to the UMP kinase family. In terms of assembly, homohexamer.

The protein localises to the cytoplasm. It catalyses the reaction UMP + ATP = UDP + ADP. It functions in the pathway pyrimidine metabolism; CTP biosynthesis via de novo pathway; UDP from UMP (UMPK route): step 1/1. With respect to regulation, inhibited by UTP. Catalyzes the reversible phosphorylation of UMP to UDP. In Pseudomonas putida (strain ATCC 47054 / DSM 6125 / CFBP 8728 / NCIMB 11950 / KT2440), this protein is Uridylate kinase.